A 25-amino-acid chain; its full sequence is Small ribosomal subunit protein eS32 (25 aa).

The tract at residues 1 to 25 (MRAKWRKKRMRRLKRKRRKMRARSK) is disordered.

This sequence belongs to the eukaryotic ribosomal protein eS32 family. As to quaternary structure, component of the small ribosomal subunit.

In Spodoptera frugiperda (Fall armyworm), this protein is Small ribosomal subunit protein eS32 (RpL41).